A 606-amino-acid polypeptide reads, in one-letter code: Arginine--tRNA ligase (606 aa).

Positions 126-136 (PNTNKPLHLGH) match the 'HIGH' region motif.

The protein belongs to the class-I aminoacyl-tRNA synthetase family. As to quaternary structure, monomer.

The protein localises to the cytoplasm. The catalysed reaction is tRNA(Arg) + L-arginine + ATP = L-arginyl-tRNA(Arg) + AMP + diphosphate. In Phocaeicola vulgatus (strain ATCC 8482 / DSM 1447 / JCM 5826 / CCUG 4940 / NBRC 14291 / NCTC 11154) (Bacteroides vulgatus), this protein is Arginine--tRNA ligase.